The chain runs to 1881 residues: Nuclear pore membrane glycoprotein 210-like (1881 aa).

Positions 1–32 are cleaved as a signal peptide; the sequence is MIAFGAPRRRSFGLLFSLAPHLFFLFLIGTLA. N-linked (GlcNAc...) asparagine glycosylation is found at N80, N344, and N808. Positions 1078-1150 constitute a BIG2 domain; it reads FPPFRLIPEK…TIQTVNEDTG (73 aa). N-linked (GlcNAc...) asparagine glycosylation occurs at N1441. Residues 1804–1824 form a helical membrane-spanning segment; it reads YQILLFTLFAVLASTSFIFLA.

This sequence belongs to the NUP210 family. As to expression, expressed in testis.

The protein localises to the nucleus membrane. The protein resides in the nucleus. It localises to the nucleoplasm. The sequence is that of Nuclear pore membrane glycoprotein 210-like (Nup210l) from Mus musculus (Mouse).